A 462-amino-acid polypeptide reads, in one-letter code: Nuclear distribution protein PAC1 (462 aa).

The LisH domain occupies 9 to 41 (QAEELHKAIIAYLGVINAPKTAAAFREEVNFSA). Positions 60 to 87 (TSVVRLQKKVLELEQRNQSLQSELDSTT) form a coiled coil. Over residues 78–99 (SLQSELDSTTPTSLLRRNQDPS) the composition is skewed to polar residues. Positions 78 to 103 (SLQSELDSTTPTSLLRRNQDPSSWLP) are disordered. WD repeat units follow at residues 113 to 154 (SHRS…RTVK), 156 to 196 (HTKG…KNIR), 200 to 247 (GHDH…CVKT), 250 to 289 (GHAD…AKCT), 292 to 352 (GHEH…IKTL), 354 to 393 (GHDN…RCVK), 398 to 445 (AHSH…AGIR), and 447 to 462 (VIAT…IFAS). Residues 414–434 (KDAPTNGDAPNGTTANGASKK) form a disordered region.

It belongs to the WD repeat LIS1/nudF family. In terms of assembly, self-associates. Interacts with NDL1 and dynein.

It localises to the cytoplasm. The protein resides in the cytoskeleton. Its subcellular location is the spindle pole. Its function is as follows. Positively regulates the activity of the minus-end directed microtubule motor protein dynein. May enhance dynein-mediated microtubule sliding by targeting dynein to the microtubule plus end. Required for nuclear migration during vegetative growth as well as development. Required for retrograde early endosome (EE) transport from the hyphal tip. Required for localization of dynein to the mitotic spindle poles. Recruits additional proteins to the dynein complex at SPBs. This Phaeosphaeria nodorum (strain SN15 / ATCC MYA-4574 / FGSC 10173) (Glume blotch fungus) protein is Nuclear distribution protein PAC1.